We begin with the raw amino-acid sequence, 465 residues long: ATP synthase subunit beta (465 aa).

152–159 (GGAGVGKT) is an ATP binding site.

It belongs to the ATPase alpha/beta chains family. F-type ATPases have 2 components, CF(1) - the catalytic core - and CF(0) - the membrane proton channel. CF(1) has five subunits: alpha(3), beta(3), gamma(1), delta(1), epsilon(1). CF(0) has three main subunits: a(1), b(2) and c(9-12). The alpha and beta chains form an alternating ring which encloses part of the gamma chain. CF(1) is attached to CF(0) by a central stalk formed by the gamma and epsilon chains, while a peripheral stalk is formed by the delta and b chains.

It is found in the cell membrane. The catalysed reaction is ATP + H2O + 4 H(+)(in) = ADP + phosphate + 5 H(+)(out). Its function is as follows. Produces ATP from ADP in the presence of a proton gradient across the membrane. The catalytic sites are hosted primarily by the beta subunits. The polypeptide is ATP synthase subunit beta (Desulfitobacterium hafniense (strain Y51)).